The following is a 353-amino-acid chain: Phospho-furanose lactonase (353 aa).

5 residues coordinate Zn(2+): His-25, His-27, Lys-153, His-186, and His-214. An N6-carboxylysine modification is found at Lys-153. 244–245 (KY) lines the substrate pocket. Asp-272 is a binding site for Zn(2+). Substrate is bound at residue 275–278 (RILY).

Belongs to the metallo-dependent hydrolases superfamily. Phosphotriesterase family. The cofactor is Zn(2+).

It catalyses the reaction a 1,4-lactone + H2O = a 4-hydroxyacid + H(+). The enzyme catalyses D-xylono-1,4-lactone 5-phosphate + H2O = 5-phospho-D-xylonate + H(+). It carries out the reaction L-arabino-1,4-lactone 5-phosphate + H2O = 5-phospho-L-arabinonate + H(+). Its function is as follows. Catalyzes the hydrolysis of D-xylono-1,4-lactone-5-phosphate and L-arabino-1,4-lactone-5-phosphate. Also able to hydrolyze carboxy 1,4-lactones. The sequence is that of Phospho-furanose lactonase from Mycoplasmopsis agalactiae (strain NCTC 10123 / CIP 59.7 / PG2) (Mycoplasma agalactiae).